We begin with the raw amino-acid sequence, 205 residues long: MRSRRGLLIVLSRPSGVGKGTVRKELFSHEDTRFQYSISVTTRKPREGEVDGVDYFFKEREEFEEMIRNEKLLEWAEFVGNYYGTPIDYVEKTLQEGKDVFLEIEVQGAIQVKKAFPEGVFIFLAPPSLSELKSRIVGRGTETEDVIENRLTVAKEEIEMMDAYDYVVENDQVELACDRIKAIVVGEHCRRERVAKYYKEMTEGL.

Positions 6–185 (GLLIVLSRPS…ACDRIKAIVV (180 aa)) constitute a Guanylate kinase-like domain. 13–20 (RPSGVGKG) contributes to the ATP binding site.

This sequence belongs to the guanylate kinase family.

The protein localises to the cytoplasm. It carries out the reaction GMP + ATP = GDP + ADP. In terms of biological role, essential for recycling GMP and indirectly, cGMP. The polypeptide is Guanylate kinase (Bacillus cereus (strain ATCC 14579 / DSM 31 / CCUG 7414 / JCM 2152 / NBRC 15305 / NCIMB 9373 / NCTC 2599 / NRRL B-3711)).